The chain runs to 798 residues: Capsid assembly protein UL37 homolog (798 aa).

It belongs to the herpesviridae HHV-1 UL37 family.

Its subcellular location is the virion tegument. This is Capsid assembly protein UL37 homolog (U30) from Homo sapiens (Human).